A 351-amino-acid chain; its full sequence is Photosystem II D2 protein (351 aa).

A helical transmembrane segment spans residues 39-59; sequence TAYLALGGWFTGTTFVTSWYT. Histidine 116 is a chlorophyll a binding site. A helical membrane pass occupies residues 123–139; it reads GFMLRQFEIARLVGIRP. Pheophytin a-binding residues include glutamine 128 and asparagine 141. A helical membrane pass occupies residues 151-164; it reads VFLACFLIYPLGQH. Histidine 196 contacts chlorophyll a. The helical transmembrane segment at 206 to 226 threads the bilayer; sequence GALLCGIHGATVQNTLFEDGA. Residues histidine 213 and phenylalanine 260 each contribute to the a plastoquinone site. Histidine 213 contacts Fe cation. A Fe cation-binding site is contributed by histidine 267. Residues 277 to 293 form a helical membrane-spanning segment; sequence GMWTPSVGIVGLAVNLR.

It belongs to the reaction center PufL/M/PsbA/D family. PSII is composed of 1 copy each of membrane proteins PsbA, PsbB, PsbC, PsbD, PsbE, PsbF, PsbH, PsbI, PsbJ, PsbK, PsbL, PsbM, PsbT, PsbX, PsbY, Psb30/Ycf12, peripheral proteins PsbO, CyanoQ (PsbQ), PsbU, PsbV and a large number of cofactors. It forms dimeric complexes. It depends on The D1/D2 heterodimer binds P680, chlorophylls that are the primary electron donor of PSII, and subsequent electron acceptors. It shares a non-heme iron and each subunit binds pheophytin, quinone, additional chlorophylls, carotenoids and lipids. There is also a Cl(-1) ion associated with D1 and D2, which is required for oxygen evolution. The PSII complex binds additional chlorophylls, carotenoids and specific lipids. as a cofactor.

The protein resides in the cellular thylakoid membrane. The enzyme catalyses 2 a plastoquinone + 4 hnu + 2 H2O = 2 a plastoquinol + O2. Functionally, photosystem II (PSII) is a light-driven water:plastoquinone oxidoreductase that uses light energy to abstract electrons from H(2)O, generating O(2) and a proton gradient subsequently used for ATP formation. It consists of a core antenna complex that captures photons, and an electron transfer chain that converts photonic excitation into a charge separation. The D1/D2 (PsbA/PsbD) reaction center heterodimer binds P680, the primary electron donor of PSII as well as several subsequent electron acceptors. D2 is needed for assembly of a stable PSII complex. In Prochlorococcus marinus (strain MIT 9313), this protein is Photosystem II D2 protein.